The sequence spans 518 residues: Putative ribose/galactose/methyl galactoside import ATP-binding protein (518 aa).

The interval 1–22 (MSIAVLDRPMSRQDTPSASSVP) is disordered. Residues 12-22 (RQDTPSASSVP) are compositionally biased toward polar residues. ABC transporter domains are found at residues 29–265 (LEVR…VGRE) and 275–515 (VPIG…VMEL). 61–68 (GENGAGKS) provides a ligand contact to ATP.

This sequence belongs to the ABC transporter superfamily. Carbohydrate importer 2 (CUT2) (TC 3.A.1.2) family.

Its subcellular location is the cell inner membrane. The enzyme catalyses D-ribose(out) + ATP + H2O = D-ribose(in) + ADP + phosphate + H(+). It catalyses the reaction D-galactose(out) + ATP + H2O = D-galactose(in) + ADP + phosphate + H(+). In terms of biological role, part of an ABC transporter complex involved in carbohydrate import. Could be involved in ribose, galactose and/or methyl galactoside import. Responsible for energy coupling to the transport system. The sequence is that of Putative ribose/galactose/methyl galactoside import ATP-binding protein from Ralstonia nicotianae (strain ATCC BAA-1114 / GMI1000) (Ralstonia solanacearum).